A 367-amino-acid polypeptide reads, in one-letter code: Palmitoyltransferase ZDHHC2 (367 aa).

The Cytoplasmic segment spans residues 1 to 16 (MAPSGPGSSARRRCRR). A helical membrane pass occupies residues 17 to 37 (VLYWIPVVFITLLLGWSYYAY). Residues 38-54 (AIQLCIVSMENTGEQVV) lie on the Lumenal side of the membrane. A helical membrane pass occupies residues 55 to 75 (CLMAYHLLFAMFVWSYWKTIF). The Cytoplasmic segment spans residues 76 to 170 (TLPMNPSKEF…NNCVGFSNYK (95 aa)). The DHHC domain maps to 127-177 (RYCDRCQLIKPDRCHHCSVCDKCILKMDHHCPWVNNCVGFSNYKFFLLFLA). The active-site S-palmitoyl cysteine intermediate is C157. The helical transmembrane segment at 171–191 (FFLLFLAYSLLYCLFIAATDL) threads the bilayer. Over 192-208 (QYFIKFWTNGLPDTQAK) the chain is Lumenal. The chain crosses the membrane as a helical span at residues 209-229 (FHIMFLFFAAAMFSVSLSSLF). The Cytoplasmic segment spans residues 230–367 (GYHCWLVSKN…NPALTMENET (138 aa)). A mediates localization to plasma membrane and recycling endosomes region spans residues 299 to 367 (NQDPEQASTP…NPALTMENET (69 aa)). The interval 330-367 (ESQSHLLTDSQSWTESSINPGKCKAGMSNPALTMENET) is disordered. Residues 333–348 (SHLLTDSQSWTESSIN) show a composition bias toward polar residues. Residues 335 to 336 (LL) carry the Non-canonical dileucine endocytic signal motif. S341 is modified (phosphoserine). The NPxY-like endocytic signal signature appears at 358–361 (NPAL).

Belongs to the DHHC palmitoyltransferase family. Monomer. Homodimer. The monomeric form has a higher catalytic activity. In terms of processing, autopalmitoylated. In terms of tissue distribution, ubiquitously expressed. Reduced expression in colorectal cancers with liver metastasis.

It is found in the postsynaptic density. The protein resides in the postsynaptic recycling endosome membrane. The protein localises to the cell membrane. Its subcellular location is the endoplasmic reticulum membrane. It localises to the golgi apparatus membrane. The catalysed reaction is L-cysteinyl-[protein] + hexadecanoyl-CoA = S-hexadecanoyl-L-cysteinyl-[protein] + CoA. The enzyme catalyses L-cysteinyl-[protein] + tetradecanoyl-CoA = S-tetradecanoyl-L-cysteinyl-[protein] + CoA. It catalyses the reaction L-cysteinyl-[protein] + octadecanoyl-CoA = S-octadecanoyl-L-cysteinyl-[protein] + CoA. Its function is as follows. Palmitoyltransferase that catalyzes the addition of palmitate onto various protein substrates and is involved in a variety of cellular processes. Has no stringent fatty acid selectivity and in addition to palmitate can also transfer onto target proteins myristate from tetradecanoyl-CoA and stearate from octadecanoyl-CoA. In the nervous system, plays a role in long term synaptic potentiation by palmitoylating AKAP5 through which it regulates protein trafficking from the dendritic recycling endosomes to the plasma membrane and controls both structural and functional plasticity at excitatory synapses. In dendrites, mediates the palmitoylation of DLG4 when synaptic activity decreases and induces synaptic clustering of DLG4 and associated AMPA-type glutamate receptors. Also mediates the de novo and turnover palmitoylation of RGS7BP, a shuttle for Gi/o-specific GTPase-activating proteins/GAPs, promoting its localization to the plasma membrane in response to the activation of G protein-coupled receptors. Through the localization of these GTPase-activating proteins/GAPs, it also probably plays a role in G protein-coupled receptors signaling in neurons. Also probably plays a role in cell adhesion by palmitoylating CD9 and CD151 to regulate their expression and function. Palmitoylates the endoplasmic reticulum protein CKAP4 and regulates its localization to the plasma membrane. Could also palmitoylate LCK and regulate its localization to the plasma membrane. (Microbial infection) Promotes Chikungunya virus (CHIKV) replication by mediating viral nsp1 palmitoylation. In Homo sapiens (Human), this protein is Palmitoyltransferase ZDHHC2.